A 121-amino-acid polypeptide reads, in one-letter code: Protein p14.5 (121 aa).

Residue alanine 2 is modified to N-acetylalanine; by host. A disordered region spans residues 84–121 (SLVPDEADNKPEDDEESGGAKPKKKKHLFPKLSSHKSK). The segment covering 104 to 121 (KPKKKKHLFPKLSSHKSK) has biased composition (basic residues).

Belongs to the asfivirus structural protein p14.5 family. As to quaternary structure, interacts with the major capsid protein. Interacts with host IRF3; this interaction interferes with the recruitment of IRF3 to TBK1. In terms of processing, acetylated.

Its subcellular location is the virion. In terms of biological role, structural protein required for transport of intracellular particles from the assembly sites to the plasma membrane. Binds to both ssDNA and dsDNA. Suppressed the activation of the cGAS/STING pathway by interfering with the recruitment of IRF3 to TBK1, which in turn suppresses IRF3 phosphorylation, decreasing interferon production. The chain is Protein p14.5 from African swine fever virus (isolate Pig/Kenya/KEN-50/1950) (ASFV).